The primary structure comprises 516 residues: Nucleolar complex protein 4 homolog (516 aa).

The next 3 helical transmembrane spans lie at 296–316 (SACD…FILI), 347–367 (FFHL…LVAA), and 375–395 (LALT…CNLL).

Belongs to the CBF/MAK21 family.

Its subcellular location is the nucleus membrane. It is found in the nucleus. The protein localises to the nucleolus. In Rattus norvegicus (Rat), this protein is Nucleolar complex protein 4 homolog (Noc4l).